The chain runs to 342 residues: S-adenosylmethionine:tRNA ribosyltransferase-isomerase (342 aa).

This sequence belongs to the QueA family. In terms of assembly, monomer.

Its subcellular location is the cytoplasm. The catalysed reaction is 7-aminomethyl-7-carbaguanosine(34) in tRNA + S-adenosyl-L-methionine = epoxyqueuosine(34) in tRNA + adenine + L-methionine + 2 H(+). It participates in tRNA modification; tRNA-queuosine biosynthesis. In terms of biological role, transfers and isomerizes the ribose moiety from AdoMet to the 7-aminomethyl group of 7-deazaguanine (preQ1-tRNA) to give epoxyqueuosine (oQ-tRNA). This chain is S-adenosylmethionine:tRNA ribosyltransferase-isomerase, found in Streptococcus pyogenes serotype M12 (strain MGAS2096).